We begin with the raw amino-acid sequence, 379 residues long: NAD-dependent protein deacetylase sirtuin-2 (379 aa).

The span at 1–10 (MSEEVSKRVE) shows a compositional bias: basic and acidic residues. The segment at 1 to 32 (MSEEVSKRVEEEADTPGLEGQSDDSSDEGDAS) is disordered. Residues 21–32 (QSDDSSDEGDAS) show a composition bias toward acidic residues. The Deacetylase sirtuin-type domain maps to 55–335 (KVLDELTLDS…MTLAELLGWK (281 aa)). NAD(+)-binding positions include 83–87 (AGIST), 93–95 (DFR), and 165–168 (QNID). His185 serves as the catalytic Proton acceptor. Residues Cys193, Cys198, Cys219, and Cys222 each contribute to the Zn(2+) site. NAD(+) contacts are provided by residues 260–261 (TS), 284–286 (NME), and Cys321. The span at 349-361 (IDSKDAKKTDKEA) shows a compositional bias: basic and acidic residues. Positions 349–379 (IDSKDAKKTDKEASQSSKSAVAEAEKTDKTE) are disordered.

The protein belongs to the sirtuin family. Class I subfamily. It depends on Zn(2+) as a cofactor.

It is found in the cytoplasm. The protein resides in the nucleus. It catalyses the reaction N(6)-acetyl-L-lysyl-[protein] + NAD(+) + H2O = 2''-O-acetyl-ADP-D-ribose + nicotinamide + L-lysyl-[protein]. The catalysed reaction is N(6)-tetradecanoyl-L-lysyl-[protein] + NAD(+) + H2O = 2''-O-tetradecanoyl-ADP-D-ribose + nicotinamide + L-lysyl-[protein]. It carries out the reaction N(6)-hexadecanoyl-L-lysyl-[protein] + NAD(+) + H2O = 2''-O-hexadecanoyl-ADP-D-ribose + nicotinamide + L-lysyl-[protein]. NAD-dependent protein deacetylase, which deacetylates internal lysines on histone and alpha-tubulin as well as many other proteins such as key transcription factors. Participates in the modulation of multiple and diverse biological processes such as cell cycle control, genomic integrity, microtubule dynamics, cell differentiation, metabolic networks, and autophagy. Plays a major role in the control of cell cycle progression and genomic stability. Deacetylates histone H4 at 'Lys-16' (H4K16ac) at the VEGFA promoter. Thereby contributes to regulate expression of vegfa, a key regulator of angiogenesis. In addition to protein deacetylase activity, also has activity toward long-chain fatty acyl groups and mediates protein-lysine demyristoylation and depalmitoylation of target proteins. This Danio rerio (Zebrafish) protein is NAD-dependent protein deacetylase sirtuin-2 (sirt2).